A 112-amino-acid polypeptide reads, in one-letter code: UPF0060 membrane protein CMS0846 (112 aa).

The next 4 membrane-spanning stretches (helical) occupy residues 6 to 26, 32 to 52, 61 to 81, and 87 to 107; these read VILF…IWQA, PFWW…IATL, ILAA…TVVD, and RWDV…MAAP.

It belongs to the UPF0060 family.

It is found in the cell membrane. This Clavibacter sepedonicus (Clavibacter michiganensis subsp. sepedonicus) protein is UPF0060 membrane protein CMS0846.